The chain runs to 284 residues: tRNA pseudouridine synthase B (284 aa).

The active-site Nucleophile is D40.

The protein belongs to the pseudouridine synthase TruB family. Type 1 subfamily.

It catalyses the reaction uridine(55) in tRNA = pseudouridine(55) in tRNA. Responsible for synthesis of pseudouridine from uracil-55 in the psi GC loop of transfer RNAs. The chain is tRNA pseudouridine synthase B from Helicobacter hepaticus (strain ATCC 51449 / 3B1).